Consider the following 257-residue polypeptide: Neurotrophin-3 (257 aa).

The first 18 residues, 1–18 (MSILFYMIFLAYLRGIQG), serve as a signal peptide directing secretion. Positions 19–138 (NSMDQRRLPE…VANRTARRKR (120 aa)) are excised as a propeptide. Positions 61–81 (STLPKAEAPREPERGEPAKSE) are disordered. The span at 67–79 (EAPREPERGEPAK) shows a compositional bias: basic and acidic residues. The N-linked (GlcNAc...) asparagine glycan is linked to Asn131. 3 cysteine pairs are disulfide-bonded: Cys152–Cys217, Cys195–Cys246, and Cys205–Cys248.

This sequence belongs to the NGF-beta family.

Its subcellular location is the secreted. Seems to promote the survival of visceral and proprioceptive sensory neurons. This Sus scrofa (Pig) protein is Neurotrophin-3 (NTF3).